A 648-amino-acid polypeptide reads, in one-letter code: 1-deoxy-D-xylulose-5-phosphate synthase (648 aa).

Residues His74 and 115 to 117 (GHA) each bind thiamine diphosphate. Asp146 provides a ligand contact to Mg(2+). Thiamine diphosphate is bound by residues 147–148 (GA), Asn176, Tyr292, and Glu375. Asn176 contacts Mg(2+).

Belongs to the transketolase family. DXPS subfamily. In terms of assembly, homodimer. Mg(2+) serves as cofactor. The cofactor is thiamine diphosphate.

The catalysed reaction is D-glyceraldehyde 3-phosphate + pyruvate + H(+) = 1-deoxy-D-xylulose 5-phosphate + CO2. It participates in metabolic intermediate biosynthesis; 1-deoxy-D-xylulose 5-phosphate biosynthesis; 1-deoxy-D-xylulose 5-phosphate from D-glyceraldehyde 3-phosphate and pyruvate: step 1/1. In terms of biological role, catalyzes the acyloin condensation reaction between C atoms 2 and 3 of pyruvate and glyceraldehyde 3-phosphate to yield 1-deoxy-D-xylulose-5-phosphate (DXP). The chain is 1-deoxy-D-xylulose-5-phosphate synthase from Synechococcus sp. (strain JA-2-3B'a(2-13)) (Cyanobacteria bacterium Yellowstone B-Prime).